Consider the following 463-residue polypeptide: Argininosuccinate lyase (463 aa).

The protein belongs to the lyase 1 family. Argininosuccinate lyase subfamily.

Its subcellular location is the cytoplasm. The enzyme catalyses 2-(N(omega)-L-arginino)succinate = fumarate + L-arginine. It participates in amino-acid biosynthesis; L-arginine biosynthesis; L-arginine from L-ornithine and carbamoyl phosphate: step 3/3. In Prochlorococcus marinus (strain NATL1A), this protein is Argininosuccinate lyase.